The sequence spans 98 residues: Alpha-elicitin hibernalin (98 aa).

3 disulfide bridges follow: Cys3-Cys71, Cys27-Cys56, and Cys51-Cys95.

The protein localises to the secreted. Induces local and distal defense responses (incompatible hypersensitive reaction) in plants from the solanaceae and cruciferae families. Elicits leaf necrosis and causes the accumulation of pathogenesis-related proteins. Might interact with the lipidic molecules of the plasma membrane. This Phytophthora hibernalis protein is Alpha-elicitin hibernalin.